The primary structure comprises 417 residues: Cell division protein FtsA (417 aa).

The protein belongs to the FtsA/MreB family. In terms of assembly, self-interacts. Interacts with FtsZ.

It is found in the cell inner membrane. Its function is as follows. Cell division protein that is involved in the assembly of the Z ring. May serve as a membrane anchor for the Z ring. This chain is Cell division protein FtsA, found in Pseudomonas aeruginosa (strain ATCC 15692 / DSM 22644 / CIP 104116 / JCM 14847 / LMG 12228 / 1C / PRS 101 / PAO1).